The chain runs to 143 residues: Ribosome maturation factor RimP (143 aa).

The protein belongs to the RimP family.

The protein localises to the cytoplasm. Required for maturation of 30S ribosomal subunits. The sequence is that of Ribosome maturation factor RimP from Neisseria meningitidis serogroup C / serotype 2a (strain ATCC 700532 / DSM 15464 / FAM18).